The chain runs to 634 residues: tRNA uridine 5-carboxymethylaminomethyl modification enzyme MnmG (634 aa).

14–19 (GGGHAG) contributes to the FAD binding site. Position 279–293 (279–293 (GPRYCPSIEDKVVRF)) interacts with NAD(+).

Belongs to the MnmG family. As to quaternary structure, homodimer. Heterotetramer of two MnmE and two MnmG subunits. Requires FAD as cofactor.

Its subcellular location is the cytoplasm. Functionally, NAD-binding protein involved in the addition of a carboxymethylaminomethyl (cmnm) group at the wobble position (U34) of certain tRNAs, forming tRNA-cmnm(5)s(2)U34. This Xanthomonas axonopodis pv. citri (strain 306) protein is tRNA uridine 5-carboxymethylaminomethyl modification enzyme MnmG.